The primary structure comprises 882 residues: Holliday junction resolvase MOC1, chloroplastic (882 aa).

2 disordered regions span residues 87–148 and 323–351; these read IRDG…QTPT and TPAA…PRAA. A compositionally biased stretch (polar residues) spans 91-111; it reads PNSNSRCSTVRTHATRSKSTG. Over residues 112–125 the composition is skewed to low complexity; that stretch reads PSRATSSGPATAAP. Residues 134–148 show a composition bias toward polar residues; it reads NDTQDGGLTSEQTPT. Positions 323 to 337 are enriched in low complexity; the sequence is TPAAASQTPPTTVTS. Mg(2+)-binding residues include aspartate 397, glutamate 552, asparagine 629, and aspartate 634. The segment at 710 to 882 is disordered; the sequence is KVERKAQARS…DGGVSGSESE (173 aa). Positions 732 to 743 are enriched in acidic residues; that stretch reads EEPEAQAEEEQA. 4 stretches are compositionally biased toward low complexity: residues 744-758, 769-783, 810-819, and 830-844; these read EAGT…GAAA, VESG…VAAG, SGKSSSKAEA, and ASVG…SVGS. Composition is skewed to gly residues over residues 845–857 and 868–882; these read SSGG…GGVK and AKAG…SESE.

Mg(2+) serves as cofactor. It depends on Mn(2+) as a cofactor.

The protein localises to the plastid. It localises to the chloroplast. It carries out the reaction Endonucleolytic cleavage at a junction such as a reciprocal single-stranded crossover between two homologous DNA duplexes (Holliday junction).. A structure-specific endonuclease that resolves Holliday junction (HJ) intermediates during genetic recombination. Cleaves 4-way DNA junctions introducing paired nicks in opposing strands, leaving a 5'-terminal phosphate and a 3'-terminal hydroxyl group that are ligated to produce recombinant products. Mediates chloroplast nucleoid segregation during chloroplast division. The sequence is that of Holliday junction resolvase MOC1, chloroplastic from Chlamydomonas reinhardtii (Chlamydomonas smithii).